Reading from the N-terminus, the 702-residue chain is Vacuolar protein sorting-associated protein 52 homolog (702 aa).

Residues 505–535 are a coiled coil; sequence KEMGAKMEAVLENSEDSIEQLLTRMSAMQQT.

The protein belongs to the VPS52 family. As to quaternary structure, component of the Golgi-associated retrograde protein (GARP) complex, also called VFT (VPS fifty-three) complex, composed of vps-51, vps-52, vps-53 and vps-54. Within the complex interacts with vps-53 and vps-54. Interacts with the small GTPases rab-6.1 and rab-6.2. Ubiquitously expressed, with particularly strong expression in neuronal cells. Specifically expressed in head and tail neurons and in the pharynx and ventral cord motor neurons.

It is found in the golgi apparatus. The protein localises to the trans-Golgi network. The protein resides in the perikaryon. It localises to the cytoplasm. Its subcellular location is the perinuclear region. In terms of biological role, acts as a component of the GARP complex that is involved in retrograde transport from early and late endosomes to the trans-Golgi network (TGN). The GARP complex facilitates tethering as well as SNARE complex assembly at the Golgi. Plays a role in the trafficking of cargo to dense-core vesicles, probably through association with the EARP-interacting protein eipr-1. Important for neuronal function. The polypeptide is Vacuolar protein sorting-associated protein 52 homolog (Caenorhabditis elegans).